Reading from the N-terminus, the 289-residue chain is ATP synthase gamma chain (289 aa).

Belongs to the ATPase gamma chain family. F-type ATPases have 2 components, CF(1) - the catalytic core - and CF(0) - the membrane proton channel. CF(1) has five subunits: alpha(3), beta(3), gamma(1), delta(1), epsilon(1). CF(0) has three main subunits: a, b and c.

It localises to the cell inner membrane. Produces ATP from ADP in the presence of a proton gradient across the membrane. The gamma chain is believed to be important in regulating ATPase activity and the flow of protons through the CF(0) complex. The polypeptide is ATP synthase gamma chain (Janthinobacterium sp. (strain Marseille) (Minibacterium massiliensis)).